Reading from the N-terminus, the 421-residue chain is MRVIVLGSGVIGVASAYYLARQGAEVTVLDRQSGPAEETSFGNAGQISPGYSTPWAAPGIPFKAVKWMFQHHAPLAINLDGSMWQLQWMAQMLKNCNPQSYAVNKERMMRVAEYSRDCLRELRKDTGIHYENRAKGTLQLFRKEAQMEAVQRDISVLEECGVSYELLNANELGRVEPALANAQDKLVGGLHLPNDETGDCYLFTNALAQIAKELGVNFQFNQNVEKLIVEGDQIKGVQVNGKILTADRYVLAFGSYSRDFLKPLDLQLPVYPVKGYSLTIPIVDPAFAPQSTVLDETYKIAITRFDQRIRVGGMAELSGFNLGLNEDRRATLQMVTQDLFPGGDMEQASFWTGLRPMTPDSTPIIGATRFKNLFLNTGHGTLGWTMACGSGKLISDIVLNHKTDISTDGLSIQRYSHAHAA.

Val-3–Tyr-17 lines the FAD pocket.

This sequence belongs to the DadA oxidoreductase family. The cofactor is FAD.

The enzyme catalyses a D-alpha-amino acid + A + H2O = a 2-oxocarboxylate + AH2 + NH4(+). The protein operates within amino-acid degradation; D-alanine degradation; NH(3) and pyruvate from D-alanine: step 1/1. Its function is as follows. Oxidative deamination of D-amino acids. The chain is D-amino acid dehydrogenase from Acinetobacter baumannii (strain ATCC 17978 / DSM 105126 / CIP 53.77 / LMG 1025 / NCDC KC755 / 5377).